The chain runs to 363 residues: Jasmonate-induced oxygenase 3 (363 aa).

In terms of domain architecture, Fe2OG dioxygenase spans 210-312 (ESGGCLRVNY…RLSLAFFYNP (103 aa)). Arg-216 is a binding site for jasmonate. Residues Asn-218 and Tyr-220 each contribute to the 2-oxoglutarate site. Fe cation is bound by residues His-235, Asp-237, and His-293. 2-oxoglutarate-binding residues include Arg-303 and Ser-305. Jasmonate contacts are provided by Arg-342 and Arg-346.

The protein belongs to the iron/ascorbate-dependent oxidoreductase family. L-ascorbate serves as cofactor. Fe(2+) is required as a cofactor.

The enzyme catalyses jasmonate + 2-oxoglutarate + O2 = (1R,2R)-12-hydroxyjasmonate + succinate + CO2. 2-oxoglutarate-dependent dioxygenase involved in the oxidation of jasmonate (JA), a stress-induced phytohormone synthesized in response to attack by pathogens and herbivores, which triggers the activation of defense responses via the JA-mediated signaling pathway. Converts JA to 12-hydroxyjasmonate (12OH-JA), an inactive form of JA. Is specific to free JA, and cannot oxidize the bioactive form jasmonoyl-L-isoleucine (JA-Ile) or other JA-amino acid conjugates. Prevents over-accumulation of JA and indirectly its bioactive form JA-Ile under stress response. Acts as a negative regulator of JA-mediated defense signaling, by contributing to 12OH-JA accumulation, which represses JA defense responses upon infection by the fungal pathogen Botrytis cinerea. Acts as a negative regulator of JA-mediated defense responses upon infestation by the herbivorous caterpillar Mamestra brassicae. This chain is Jasmonate-induced oxygenase 3, found in Arabidopsis thaliana (Mouse-ear cress).